The primary structure comprises 202 residues: Arenicin-2 (202 aa).

A signal peptide spans 1 to 25 (MTSTQSVAVYATLILAIFCFNDIHC). Residues 26-181 (DPIAEARAAA…SGDNNEPEKR (156 aa)) constitute a propeptide that is removed on maturation. The 96-residue stretch at 73-168 (GDGVEGSVMV…ACQGKSVYWL (96 aa)) folds into the BRICHOS domain. Intrachain disulfides connect C100-C160 and C184-C201.

Functionally, has antimicrobial activity against the Gram-negative bacteria E.coli and P.mirabilis, the Gram-positive bacterium L.monocytogenes and the yeast C.albicans. The protein is Arenicin-2 of Arenicola marina (Lugworm).